We begin with the raw amino-acid sequence, 378 residues long: Queuine tRNA-ribosyltransferase (378 aa).

Asp92 serves as the catalytic Proton acceptor. Residues 92–96 (DSGGF), Asp146, Gln188, and Gly215 each bind substrate. The interval 246–252 (GVGTHLE) is RNA binding. Residue Asp265 is the Nucleophile of the active site. Positions 270–274 (TRLAR) are RNA binding; important for wobble base 34 recognition. Zn(2+)-binding residues include Cys303, Cys305, Cys308, and His334.

This sequence belongs to the queuine tRNA-ribosyltransferase family. In terms of assembly, homodimer. Within each dimer, one monomer is responsible for RNA recognition and catalysis, while the other monomer binds to the replacement base PreQ1. It depends on Zn(2+) as a cofactor.

The enzyme catalyses 7-aminomethyl-7-carbaguanine + guanosine(34) in tRNA = 7-aminomethyl-7-carbaguanosine(34) in tRNA + guanine. It functions in the pathway tRNA modification; tRNA-queuosine biosynthesis. Its function is as follows. Catalyzes the base-exchange of a guanine (G) residue with the queuine precursor 7-aminomethyl-7-deazaguanine (PreQ1) at position 34 (anticodon wobble position) in tRNAs with GU(N) anticodons (tRNA-Asp, -Asn, -His and -Tyr). Catalysis occurs through a double-displacement mechanism. The nucleophile active site attacks the C1' of nucleotide 34 to detach the guanine base from the RNA, forming a covalent enzyme-RNA intermediate. The proton acceptor active site deprotonates the incoming PreQ1, allowing a nucleophilic attack on the C1' of the ribose to form the product. After dissociation, two additional enzymatic reactions on the tRNA convert PreQ1 to queuine (Q), resulting in the hypermodified nucleoside queuosine (7-(((4,5-cis-dihydroxy-2-cyclopenten-1-yl)amino)methyl)-7-deazaguanosine). In Thermosynechococcus vestitus (strain NIES-2133 / IAM M-273 / BP-1), this protein is Queuine tRNA-ribosyltransferase.